The primary structure comprises 441 residues: UDP-N-acetylmuramoylalanine--D-glutamate ligase (441 aa).

Residue Gly-112 to Thr-118 coordinates ATP.

This sequence belongs to the MurCDEF family.

It localises to the cytoplasm. The enzyme catalyses UDP-N-acetyl-alpha-D-muramoyl-L-alanine + D-glutamate + ATP = UDP-N-acetyl-alpha-D-muramoyl-L-alanyl-D-glutamate + ADP + phosphate + H(+). Its pathway is cell wall biogenesis; peptidoglycan biosynthesis. Functionally, cell wall formation. Catalyzes the addition of glutamate to the nucleotide precursor UDP-N-acetylmuramoyl-L-alanine (UMA). This is UDP-N-acetylmuramoylalanine--D-glutamate ligase from Gloeobacter violaceus (strain ATCC 29082 / PCC 7421).